A 77-amino-acid chain; its full sequence is Neurotoxin LmNaTx21.1 (77 aa).

Positions Leu1–Leu7 are cleaved as a signal peptide. The region spanning Lys16–Arg76 is the LCN-type CS-alpha/beta domain. Intrachain disulfides connect Cys26–Cys75, Cys30–Cys51, Cys37–Cys58, and Cys41–Cys60.

It belongs to the long (4 C-C) scorpion toxin superfamily. Sodium channel inhibitor family. Alpha subfamily. As to expression, expressed by the venom gland.

Its subcellular location is the secreted. Binds voltage-independently at site-3 of voltage-gated sodium channels (Nav) and inhibits the inactivation of the activated channels, thereby blocking neuronal transmission. The polypeptide is Neurotoxin LmNaTx21.1 (Lychas mucronatus (Chinese swimming scorpion)).